Reading from the N-terminus, the 606-residue chain is Membrane protein insertase YidC (606 aa).

Residues 8 to 28 (LILATALSFIVILVWFVLFPP) form a helical membrane-spanning segment. Residues 33–59 (MPLTGETSTELTPDAATGSLPSVTSDT) form a disordered region. 6 helical membrane passes run 116 to 136 (IVTMLSPVGSPGAYYALYGWA), 348 to 368 (FIDSIDWGWFFFLTKPIFFLL), 374 to 394 (FIGNMGWAIIGLTLIIKAILL), 448 to 468 (LPILLQIPIFFSLYKVIFVTI), 506 to 526 (SIMALIFIGILPLLLGISMWL), and 542 to 562 (IFAWMPWVFMFMLGGFASGLV).

This sequence belongs to the OXA1/ALB3/YidC family. Type 1 subfamily. Interacts with the Sec translocase complex via SecD. Specifically interacts with transmembrane segments of nascent integral membrane proteins during membrane integration.

Its subcellular location is the cell inner membrane. Its function is as follows. Required for the insertion and/or proper folding and/or complex formation of integral membrane proteins into the membrane. Involved in integration of membrane proteins that insert both dependently and independently of the Sec translocase complex, as well as at least some lipoproteins. Aids folding of multispanning membrane proteins. The protein is Membrane protein insertase YidC of Roseobacter denitrificans (strain ATCC 33942 / OCh 114) (Erythrobacter sp. (strain OCh 114)).